A 100-amino-acid chain; its full sequence is Small ribosomal subunit protein uS14c (100 aa).

This sequence belongs to the universal ribosomal protein uS14 family. As to quaternary structure, part of the 30S ribosomal subunit.

The protein resides in the plastid. Its subcellular location is the chloroplast. Its function is as follows. Binds 16S rRNA, required for the assembly of 30S particles. The protein is Small ribosomal subunit protein uS14c of Aethionema grandiflorum (Persian stone-cress).